We begin with the raw amino-acid sequence, 426 residues long: Phosphomethylpyrimidine synthase (426 aa).

Residues Asn65, Met94, Tyr123, His162, Ser184–Gly186, Asp225–Arg228, and Glu264 contribute to the substrate site. His268 is a Zn(2+) binding site. Tyr291 is a substrate binding site. His332 provides a ligand contact to Zn(2+). [4Fe-4S] cluster-binding residues include Cys408, Cys411, and Cys415.

The protein belongs to the ThiC family. [4Fe-4S] cluster is required as a cofactor.

It catalyses the reaction 5-amino-1-(5-phospho-beta-D-ribosyl)imidazole + S-adenosyl-L-methionine = 4-amino-2-methyl-5-(phosphooxymethyl)pyrimidine + CO + 5'-deoxyadenosine + formate + L-methionine + 3 H(+). It functions in the pathway cofactor biosynthesis; thiamine diphosphate biosynthesis. Catalyzes the synthesis of the hydroxymethylpyrimidine phosphate (HMP-P) moiety of thiamine from aminoimidazole ribotide (AIR) in a radical S-adenosyl-L-methionine (SAM)-dependent reaction. The sequence is that of Phosphomethylpyrimidine synthase from Methanococcus vannielii (strain ATCC 35089 / DSM 1224 / JCM 13029 / OCM 148 / SB).